Reading from the N-terminus, the 144-residue chain is Cytochrome c oxidase subunit 4 isoform 1, mitochondrial (144 aa).

Residues 1 to 73 lie on the Mitochondrial matrix side of the membrane; that stretch reads SVVKSEDYTL…SFAEMNRGSN (73 aa). An N6-acetyllysine; alternate modification is found at Lys-4. Lys-4 is subject to N6-succinyllysine; alternate. Phosphoserine is present on residues Ser-31 and Ser-33. Position 35 is an N6-acetyllysine; alternate (Lys-35). Lys-35 carries the N6-succinyllysine; alternate modification. N6-acetyllysine is present on Lys-42. A helical transmembrane segment spans residues 74–99; the sequence is EWKTVVGAAMFFIGFTAILIMLEKRY. Residues 100 to 144 are Mitochondrial intermembrane-facing; it reads VYGPLPHTFDKEWVAMQTKRMLDLKVNPVDGLASKWDYEKKEWKK.

The protein belongs to the cytochrome c oxidase IV family. Component of the cytochrome c oxidase (complex IV, CIV), a multisubunit enzyme composed of 14 subunits. The complex is composed of a catalytic core of 3 subunits MT-CO1, MT-CO2 and MT-CO3, encoded in the mitochondrial DNA, and 11 supernumerary subunits COX4I, COX5A, COX5B, COX6A, COX6B, COX6C, COX7A, COX7B, COX7C, COX8 and NDUFA4, which are encoded in the nuclear genome. The complex exists as a monomer or a dimer and forms supercomplexes (SCs) in the inner mitochondrial membrane with NADH-ubiquinone oxidoreductase (complex I, CI) and ubiquinol-cytochrome c oxidoreductase (cytochrome b-c1 complex, complex III, CIII), resulting in different assemblies (supercomplex SCI(1)III(2)IV(1) and megacomplex MCI(2)III(2)IV(2)). Interacts with PHB2; the interaction decreases in absence of SPHK2. Interacts with AFG1L. Interacts with ABCB7; this interaction allows the regulation of cellular iron homeostasis and cellular reactive oxygen species (ROS) levels in cardiomyocytes. Interacts with FLVCR2; this interaction occurs in the absence of heme and is disrupted upon heme binding. Interacts with IRGC.

The protein resides in the mitochondrion inner membrane. It functions in the pathway energy metabolism; oxidative phosphorylation. Its function is as follows. Component of the cytochrome c oxidase, the last enzyme in the mitochondrial electron transport chain which drives oxidative phosphorylation. The respiratory chain contains 3 multisubunit complexes succinate dehydrogenase (complex II, CII), ubiquinol-cytochrome c oxidoreductase (cytochrome b-c1 complex, complex III, CIII) and cytochrome c oxidase (complex IV, CIV), that cooperate to transfer electrons derived from NADH and succinate to molecular oxygen, creating an electrochemical gradient over the inner membrane that drives transmembrane transport and the ATP synthase. Cytochrome c oxidase is the component of the respiratory chain that catalyzes the reduction of oxygen to water. Electrons originating from reduced cytochrome c in the intermembrane space (IMS) are transferred via the dinuclear copper A center (CU(A)) of subunit 2 and heme A of subunit 1 to the active site in subunit 1, a binuclear center (BNC) formed by heme A3 and copper B (CU(B)). The BNC reduces molecular oxygen to 2 water molecules using 4 electrons from cytochrome c in the IMS and 4 protons from the mitochondrial matrix. The chain is Cytochrome c oxidase subunit 4 isoform 1, mitochondrial (COX4I1) from Pithecia pithecia (White-faced saki).